The chain runs to 877 residues: Lipophilic envelope-spanning tunnel protein B (877 aa).

Residues 1–19 (MSQETPASTTEAQIKNKRR) lie on the Cytoplasmic side of the membrane. Residues 20-40 (ISPFWLLPFIALMIASWLIWD) form a helical membrane-spanning segment. Residues 41-877 (SYQDRGNTVT…WREWGTALPK (837 aa)) lie on the Periplasmic side of the membrane. MCE/MlaD regions lie at residues 46-149 (GNTV…VALD), 160-272 (DLMI…GLYE), 279-382 (RGVI…VVPG), 391-499 (DVLT…PLYA), 515-625 (TTVS…ILYA), 634-737 (GGQI…LQEA), and 746-862 (DGLS…LLQE).

Belongs to the PqiB family. As to quaternary structure, homohexamer. May interact with LetA in the inner membrane. May also interact with partners in the outer membrane.

The protein resides in the cell inner membrane. In terms of biological role, forms a tunnel that spans the entire periplasmic space. Is probably involved in the transport of lipids between the inner membrane and the outer membrane through the tunnel. Forms a dynamic tunnel sufficiently long to mediate lipid transport directly between the two membranes without the need for a shuttle protein. Binds phospholipids. Lipids bind inside the tunnel. Required for outer membrane homeostasis. Contributes to membrane integrity. The sequence is that of Lipophilic envelope-spanning tunnel protein B from Escherichia coli (strain K12).